The chain runs to 31 residues: Photosystem II reaction center protein T (31 aa).

A helical transmembrane segment spans residues 3–23 (ALVYTFLLVGTLGIIFFSIFF).

This sequence belongs to the PsbT family. As to quaternary structure, PSII is composed of 1 copy each of membrane proteins PsbA, PsbB, PsbC, PsbD, PsbE, PsbF, PsbH, PsbI, PsbJ, PsbK, PsbL, PsbM, PsbT, PsbY, PsbZ, Psb30/Ycf12, at least 3 peripheral proteins of the oxygen-evolving complex and a large number of cofactors. It forms dimeric complexes.

It is found in the plastid. It localises to the chloroplast thylakoid membrane. In terms of biological role, found at the monomer-monomer interface of the photosystem II (PS II) dimer, plays a role in assembly and dimerization of PSII. PSII is a light-driven water plastoquinone oxidoreductase, using light energy to abstract electrons from H(2)O, generating a proton gradient subsequently used for ATP formation. The polypeptide is Photosystem II reaction center protein T (Bigelowiella natans (Pedinomonas minutissima)).